A 311-amino-acid chain; its full sequence is Protoheme IX farnesyltransferase (311 aa).

A run of 8 helical transmembrane segments spans residues 39–59 (LLAMAAGLSLALYVTGIPIGE), 61–81 (LPEILFAIFGSAFVIGAAGAF), 111–131 (ALVLGISLSLLGLLLLGVASP), 133–153 (AALFGFLGLFLYVVPYTMWSK), 162–182 (IGSVGGAVPPLIGWAAISGDL), 187–207 (IIGLFVVTVLWQMPHFYAIAI), 246–266 (FFFVSLSWFITIVALVLSLIW), and 287–307 (FVFSLNYLTILFTVIIGFSLL).

This sequence belongs to the UbiA prenyltransferase family. Protoheme IX farnesyltransferase subfamily. In terms of assembly, interacts with CtaA.

It localises to the cell membrane. It carries out the reaction heme b + (2E,6E)-farnesyl diphosphate + H2O = Fe(II)-heme o + diphosphate. It participates in porphyrin-containing compound metabolism; heme O biosynthesis; heme O from protoheme: step 1/1. Its function is as follows. Converts heme B (protoheme IX) to heme O by substitution of the vinyl group on carbon 2 of heme B porphyrin ring with a hydroxyethyl farnesyl side group. The protein is Protoheme IX farnesyltransferase of Shouchella clausii (strain KSM-K16) (Alkalihalobacillus clausii).